The chain runs to 201 residues: Glycerol-3-phosphate acyltransferase (201 aa).

The next 5 membrane-spanning stretches (helical) occupy residues 5-25 (LLGA…FGVV), 55-75 (KMGV…ILVA), 87-107 (FWVT…VWLG), 118-138 (LGIF…GYAV), and 164-184 (TYGP…LIFV).

This sequence belongs to the PlsY family. Probably interacts with PlsX.

It localises to the cell inner membrane. The catalysed reaction is an acyl phosphate + sn-glycerol 3-phosphate = a 1-acyl-sn-glycero-3-phosphate + phosphate. It functions in the pathway lipid metabolism; phospholipid metabolism. Catalyzes the transfer of an acyl group from acyl-phosphate (acyl-PO(4)) to glycerol-3-phosphate (G3P) to form lysophosphatidic acid (LPA). This enzyme utilizes acyl-phosphate as fatty acyl donor, but not acyl-CoA or acyl-ACP. The chain is Glycerol-3-phosphate acyltransferase from Anaeromyxobacter dehalogenans (strain 2CP-1 / ATCC BAA-258).